The chain runs to 171 residues: MTEKNQDAVTEEQGTEVVLQIQRIYVKDVSFEAPNLPHIFQQEWKPKLDFNLSTETTHLAEDLYEVCLNISVETTMEGSEDVAFICEVKQAGIFAISGLEDVQLAHCLTSQCPNMLFPYARELISSLVNRGTFPALNLAPVNFDALFVEYMQRQQAQEESKAEEKEKKEVH.

Belongs to the SecB family. In terms of assembly, homotetramer, a dimer of dimers. One homotetramer interacts with 1 SecA dimer.

The protein resides in the cytoplasm. Its function is as follows. One of the proteins required for the normal export of preproteins out of the cell cytoplasm. It is a molecular chaperone that binds to a subset of precursor proteins, maintaining them in a translocation-competent state. It also specifically binds to its receptor SecA. The chain is Protein-export protein SecB from Histophilus somni (strain 129Pt) (Haemophilus somnus).